We begin with the raw amino-acid sequence, 380 residues long: Cytochrome b (380 aa).

4 helical membrane-spanning segments follow: residues 34–54 (FGSLLGICLITQILTGLLLAM), 78–99 (WLIRNLHANGASFFFICIYFHI), 114–134 (WNTGIILLLTLMATAFVGYVL), and 179–199 (FFALHFLLPFMITGLTLIHLT). Residues histidine 84 and histidine 98 each contribute to the heme b site. Residues histidine 183 and histidine 197 each coordinate heme b. Histidine 202 is an a ubiquinone binding site. A run of 4 helical transmembrane segments spans residues 227–247 (TKDILGFALMLLPLTTLALFS), 289–309 (LGGVLALAASVLILFLSPLLH), 321–341 (LSQLLFWTLVANLLILTWIGS), and 348–368 (FIIIGQLASTTYFIILLILFP).

It belongs to the cytochrome b family. As to quaternary structure, the cytochrome bc1 complex contains 11 subunits: 3 respiratory subunits (MT-CYB, CYC1 and UQCRFS1), 2 core proteins (UQCRC1 and UQCRC2) and 6 low-molecular weight proteins (UQCRH/QCR6, UQCRB/QCR7, UQCRQ/QCR8, UQCR10/QCR9, UQCR11/QCR10 and a cleavage product of UQCRFS1). This cytochrome bc1 complex then forms a dimer. Heme b is required as a cofactor.

The protein resides in the mitochondrion inner membrane. Functionally, component of the ubiquinol-cytochrome c reductase complex (complex III or cytochrome b-c1 complex) that is part of the mitochondrial respiratory chain. The b-c1 complex mediates electron transfer from ubiquinol to cytochrome c. Contributes to the generation of a proton gradient across the mitochondrial membrane that is then used for ATP synthesis. This Pygoscelis papua (Gentoo penguin) protein is Cytochrome b (MT-CYB).